The sequence spans 363 residues: 3-dehydroquinate synthase (363 aa).

NAD(+) contacts are provided by residues 134–135, Lys-147, Lys-156, and 174–177; these read TT and TLIT. Zn(2+) is bound by residues Glu-189, His-254, and His-271.

This sequence belongs to the sugar phosphate cyclases superfamily. Dehydroquinate synthase family. Requires NAD(+) as cofactor. Co(2+) serves as cofactor. Zn(2+) is required as a cofactor.

The protein localises to the cytoplasm. The catalysed reaction is 7-phospho-2-dehydro-3-deoxy-D-arabino-heptonate = 3-dehydroquinate + phosphate. The protein operates within metabolic intermediate biosynthesis; chorismate biosynthesis; chorismate from D-erythrose 4-phosphate and phosphoenolpyruvate: step 2/7. Its function is as follows. Catalyzes the conversion of 3-deoxy-D-arabino-heptulosonate 7-phosphate (DAHP) to dehydroquinate (DHQ). The protein is 3-dehydroquinate synthase of Prochlorococcus marinus subsp. pastoris (strain CCMP1986 / NIES-2087 / MED4).